The chain runs to 613 residues: Pesticidal crystal-like protein Cry16Aa (613 aa).

This sequence belongs to the delta endotoxin family.

The protein localises to the secreted. In terms of biological role, toxin active on mosquito larvae of the species Aedes aegypti, Culex pipiens and Anopheles stephensi. This chain is Pesticidal crystal-like protein Cry16Aa (cry16Aa), found in Paraclostridium bifermentans (Clostridium bifermentans).